A 197-amino-acid chain; its full sequence is Peptidyl-tRNA hydrolase (197 aa).

Tyr-17 is a binding site for tRNA. The active-site Proton acceptor is the His-22. TRNA is bound by residues Phe-68, Asn-70, and Asn-116.

This sequence belongs to the PTH family. In terms of assembly, monomer.

Its subcellular location is the cytoplasm. The enzyme catalyses an N-acyl-L-alpha-aminoacyl-tRNA + H2O = an N-acyl-L-amino acid + a tRNA + H(+). In terms of biological role, hydrolyzes ribosome-free peptidyl-tRNAs (with 1 or more amino acids incorporated), which drop off the ribosome during protein synthesis, or as a result of ribosome stalling. Functionally, catalyzes the release of premature peptidyl moieties from peptidyl-tRNA molecules trapped in stalled 50S ribosomal subunits, and thus maintains levels of free tRNAs and 50S ribosomes. The polypeptide is Peptidyl-tRNA hydrolase (Yersinia enterocolitica serotype O:8 / biotype 1B (strain NCTC 13174 / 8081)).